A 250-amino-acid polypeptide reads, in one-letter code: Beta-crystallin B1 (250 aa).

Positions 1–13 (MSQAAKASATTAV) are enriched in polar residues. Residues 1 to 49 (MSQAAKASATTAVNPGPDGKGKGAPSTGPAPAPGPTPVPASVPRPAAKV) form a disordered region. Position 2 is an N-acetylserine (Ser2). Residues 2–56 (SQAAKASATTAVNPGPDGKGKGAPSTGPAPAPGPTPVPASVPRPAAKVGDLPPGS) are N-terminal arm. Pro residues predominate over residues 28-42 (GPAPAPGPTPVPASV). Beta/gamma crystallin 'Greek key' domains follow at residues 57–96 (YRLI…IVVS) and 97–141 (GPWV…RPIR). The tract at residues 142-146 (MDSQE) is connecting peptide. 2 Beta/gamma crystallin 'Greek key' domains span residues 147–188 (HKIC…TVSG) and 189–231 (GTWV…RRLR). The segment at 233 to 250 (RQWHQEGCFPVLTAEPPK) is C-terminal arm.

The protein belongs to the beta/gamma-crystallin family. Homo/heterodimer, or complexes of higher-order. The structure of beta-crystallin oligomers seems to be stabilized through interactions between the N-terminal arms. In terms of processing, specific cleavages in the N-terminal arm occur during lens maturation and give rise to truncated forms, leading to impaired oligomerization and protein insolubilization. The protease responsible for this partial degradation could be calpain II.

In terms of biological role, crystallins are the dominant structural components of the vertebrate eye lens. In Mus musculus (Mouse), this protein is Beta-crystallin B1 (Crybb1).